Reading from the N-terminus, the 183-residue chain is Inner membrane-spanning protein YciB (183 aa).

Helical transmembrane passes span 19 to 39 (LYGVQQAAITLVIATVIQLIV), 53 to 73 (IMGIFAVFFGILTAYFNDLNF), 76 to 96 (WKVTIINGLFAAVLLVSQFVF), 121 to 141 (LGWAGFFIICMLLNIVISYYF), and 151 to 171 (TFGFTGLSLIAAIATGVYLYP).

It belongs to the YciB family.

It localises to the cell inner membrane. Plays a role in cell envelope biogenesis, maintenance of cell envelope integrity and membrane homeostasis. In Actinobacillus pleuropneumoniae serotype 5b (strain L20), this protein is Inner membrane-spanning protein YciB.